A 201-amino-acid polypeptide reads, in one-letter code: LexA repressor (201 aa).

The H-T-H motif DNA-binding region spans 27–47 (RMEISSAFGFASPNAAEDHLK). Active-site for autocatalytic cleavage activity residues include serine 116 and lysine 153.

This sequence belongs to the peptidase S24 family. In terms of assembly, homodimer.

It carries out the reaction Hydrolysis of Ala-|-Gly bond in repressor LexA.. Functionally, represses a number of genes involved in the response to DNA damage (SOS response), including recA and lexA. In the presence of single-stranded DNA, RecA interacts with LexA causing an autocatalytic cleavage which disrupts the DNA-binding part of LexA, leading to derepression of the SOS regulon and eventually DNA repair. This is LexA repressor from Dechloromonas aromatica (strain RCB).